Consider the following 933-residue polypeptide: Progesterone receptor (933 aa).

Residues 1 to 164 (MTELKAKGPR…PATQGVLSPL (164 aa)) are AF3; mediates transcriptional activation. Residues 1–256 (MTELKAKGPR…AAAGGGAAAV (256 aa)) are disordered. Residues 1-566 (MTELKAKGPR…YSFESLPQKI (566 aa)) are modulating, Pro-Rich. Ser-20 bears the Phosphoserine mark. The LXXL motif 1 motif lies at 55–59 (LDGLL). Ser-81 is modified (phosphoserine). The LXXL motif 2 motif lies at 115 to 119 (LDTLL). Ser-130 and Ser-162 each carry phosphoserine. The segment at 165 to 305 (MSRSGCKAGD…LATTMMDFIH (141 aa)) is mediates transcriptional transrepression. The Nuclear localization signal signature appears at 183–187 (KVLPR). Phosphoserine is present on residues Ser-190 and Ser-213. Over residues 220–231 (EVEEEDGSESEE) the composition is skewed to acidic residues. A compositionally biased stretch (low complexity) spans 232-246 (SAGPLLKGKPRALGG). The residue at position 294 (Ser-294) is a Phosphoserine; by MAPK1. Low complexity predominate over residues 335 to 356 (AXSAFAPPRSSPSASSTPVAVG). Positions 335 to 378 (AXSAFAPPRSSPSASSTPVAVGDFPDCAYPPDAEPKDDAYPLYS) are disordered. A Phosphoserine; by MAPK modification is found at Ser-345. Lys-388 is covalently cross-linked (Glycyl lysine isopeptide (Lys-Gly) (interchain with G-Cter in SUMO); alternate). Lys-388 is covalently cross-linked (Glycyl lysine isopeptide (Lys-Gly) (interchain with G-Cter in ubiquitin); alternate). At Ser-400 the chain carries Phosphoserine; by CDK2. Residues 415 to 452 (PDFPLGPPPPLPPRAPPSRPGEAAVTAAPASASVSSAS) form a disordered region. The span at 418–433 (PLGPPPPLPPRAPPSR) shows a compositional bias: pro residues. The span at 434-452 (PGEAAVTAAPASASVSSAS) shows a compositional bias: low complexity. The AF1; mediates transcriptional activation stretch occupies residues 456-546 (STLECILYKA…VYPPYLNYLR (91 aa)). Lys-531 is covalently cross-linked (Glycyl lysine isopeptide (Lys-Gly) (interchain with G-Cter in SUMO)). NR C4-type zinc fingers lie at residues 567-587 (CLIC…CGSC) and 603-627 (CAGR…LRKC). The nuclear receptor DNA-binding region spans 567-639 (CLICGDEASG…AGMVLGGRKF (73 aa)). Position 676 is a phosphoserine (Ser-676). The region spanning 679 to 913 (QDIQLIPPLI…EFPEMMSEVI (235 aa)) is the NR LBD domain. Residues 687–933 (LINLLMSIEP…MVKPLLFHKK (247 aa)) form an AF2; mediates transcriptional activation region. Residue Arg-766 coordinates progesterone.

It belongs to the nuclear hormone receptor family. In terms of assembly, interacts with SMARD1 and UNC45A. Interacts with CUEDC2; the interaction promotes ubiquitination, decreases sumoylation, and represses transcriptional activity. Interacts with PIAS3; the interaction promotes sumoylation of PR in a hormone-dependent manner, inhibits DNA-binding, and alters nuclear export. Interacts with SP1; the interaction requires ligand-induced phosphorylation on Ser-345 by ERK1/2-MAPK. Interacts with PRMT2. Interacts with NCOA2 and NCOA1. Interacts with KLF9. Interacts with GTF2B. In terms of processing, phosphorylated on multiple serine sites. Several of these sites are hormone-dependent. Phosphorylation on Ser-294 is highly hormone-dependent and modulates ubiquitination and sumoylation on Lys-388. Phosphorylation on Ser-102 and Ser-345 requires induction by hormone. Basal phosphorylation on Ser-81, Ser-162, Ser-190 and Ser-400 is increased in response to progesterone and can be phosphorylated in vitro by the CDK2-A1 complex. Increased levels of phosphorylation on Ser-400 also in the presence of EGF, heregulin, IGF, PMA and FBS. Phosphorylation at this site by CDK2 is ligand-independent, and increases nuclear translocation and transcriptional activity. Phosphorylation at Ser-162 and Ser-294, but not at Ser-190, is impaired during the G(2)/M phase of the cell cycle. Phosphorylation on Ser-345 by ERK1/2 MAPK is required for interaction with SP1. Sumoylation is hormone-dependent and represses transcriptional activity. Sumoylation on all three sites is enhanced by PIAS3. Desumoylated by SENP1. Sumoylation on Lys-388, the main site of sumoylation, is repressed by ubiquitination on the same site, and modulated by phosphorylation at Ser-294. Post-translationally, ubiquitination is hormone-dependent and represses sumoylation on the same site. Promoted by MAPK-mediated phosphorylation on Ser-294. Ubiquitinated by UBR5, leading to its degradation: UBR5 specifically recognizes and binds ligand-bound PGR when it is not associated with coactivators (NCOAs). In presence of NCOAs, the UBR5-degron is not accessible, preventing its ubiquitination and degradation. In terms of processing, palmitoylated by ZDHHC7 and ZDHHC21. Palmitoylation is required for plasma membrane targeting and for rapid intracellular signaling via ERK and AKT kinases and cAMP generation.

Its subcellular location is the nucleus. It localises to the cytoplasm. The steroid hormones and their receptors are involved in the regulation of eukaryotic gene expression and affect cellular proliferation and differentiation in target tissues. Transcriptional activator of several progesteron-dependent promoters in a variety of cell types. Involved in activation of SRC-dependent MAPK signaling on hormone stimulation. This is Progesterone receptor (PGR) from Pan troglodytes (Chimpanzee).